A 176-amino-acid chain; its full sequence is Large ribosomal subunit protein uL6 (176 aa).

Belongs to the universal ribosomal protein uL6 family. Part of the 50S ribosomal subunit.

Functionally, this protein binds to the 23S rRNA, and is important in its secondary structure. It is located near the subunit interface in the base of the L7/L12 stalk, and near the tRNA binding site of the peptidyltransferase center. The protein is Large ribosomal subunit protein uL6 of Methanospirillum hungatei JF-1 (strain ATCC 27890 / DSM 864 / NBRC 100397 / JF-1).